The primary structure comprises 111 residues: Large ribosomal subunit protein uL29 (111 aa).

The tract at residues 1-85 (MTVAKELRQK…TKKTNEAAVN (85 aa)) is large ribosomal subunit protein uL29. Positions 86-111 (AWKQHLEANKAKLLKSRAKREDASKK) are unknown.

The protein belongs to the universal ribosomal protein uL29 family.

This chain is Large ribosomal subunit protein uL29, found in Mycoplasma pneumoniae (strain ATCC 29342 / M129 / Subtype 1) (Mycoplasmoides pneumoniae).